The sequence spans 379 residues: UDP-4-amino-4-deoxy-L-arabinose--oxoglutarate aminotransferase (379 aa).

Lysine 182 is modified (N6-(pyridoxal phosphate)lysine).

Belongs to the DegT/DnrJ/EryC1 family. ArnB subfamily. Homodimer. Pyridoxal 5'-phosphate is required as a cofactor.

It catalyses the reaction UDP-4-amino-4-deoxy-beta-L-arabinose + 2-oxoglutarate = UDP-beta-L-threo-pentopyranos-4-ulose + L-glutamate. It functions in the pathway nucleotide-sugar biosynthesis; UDP-4-deoxy-4-formamido-beta-L-arabinose biosynthesis; UDP-4-deoxy-4-formamido-beta-L-arabinose from UDP-alpha-D-glucuronate: step 2/3. Its pathway is bacterial outer membrane biogenesis; lipopolysaccharide biosynthesis. In terms of biological role, catalyzes the conversion of UDP-4-keto-arabinose (UDP-Ara4O) to UDP-4-amino-4-deoxy-L-arabinose (UDP-L-Ara4N). The modified arabinose is attached to lipid A and is required for resistance to polymyxin and cationic antimicrobial peptides. This Escherichia fergusonii (strain ATCC 35469 / DSM 13698 / CCUG 18766 / IAM 14443 / JCM 21226 / LMG 7866 / NBRC 102419 / NCTC 12128 / CDC 0568-73) protein is UDP-4-amino-4-deoxy-L-arabinose--oxoglutarate aminotransferase.